The sequence spans 193 residues: Potassium-transporting ATPase KdpC subunit (193 aa).

Residues 7–27 traverse the membrane as a helical segment; the sequence is PLVVIFVVLTAVTGLAYPAVM.

The protein belongs to the KdpC family. The system is composed of three essential subunits: KdpA, KdpB and KdpC.

It is found in the cell inner membrane. Functionally, part of the high-affinity ATP-driven potassium transport (or Kdp) system, which catalyzes the hydrolysis of ATP coupled with the electrogenic transport of potassium into the cytoplasm. This subunit acts as a catalytic chaperone that increases the ATP-binding affinity of the ATP-hydrolyzing subunit KdpB by the formation of a transient KdpB/KdpC/ATP ternary complex. The sequence is that of Potassium-transporting ATPase KdpC subunit from Burkholderia ambifaria (strain ATCC BAA-244 / DSM 16087 / CCUG 44356 / LMG 19182 / AMMD) (Burkholderia cepacia (strain AMMD)).